Here is a 387-residue protein sequence, read N- to C-terminus: tRNA pseudouridine synthase B (387 aa).

Catalysis depends on Asp-43, which acts as the Nucleophile.

It belongs to the pseudouridine synthase TruB family. Type 1 subfamily.

It catalyses the reaction uridine(55) in tRNA = pseudouridine(55) in tRNA. In terms of biological role, responsible for synthesis of pseudouridine from uracil-55 in the psi GC loop of transfer RNAs. This chain is tRNA pseudouridine synthase B, found in Bifidobacterium longum subsp. infantis (strain ATCC 15697 / DSM 20088 / JCM 1222 / NCTC 11817 / S12).